The sequence spans 471 residues: Chitobiosyldiphosphodolichol beta-mannosyltransferase (471 aa).

The Lumenal segment spans residues 1 to 31 (MDTSSVTMHTERACCHQAQRAVAAMLDKAPS). Residues 32 to 52 (WLIWTAVLYVGLPFMLYWAVP) traverse the membrane as a helical segment. Topologically, residues 53–126 (YLFYHNKTKS…ALPGASNAGK (74 aa)) are cytoplasmic. The helical intramembrane region spans 127–147 (SLGQTARKVVLQTCHIVRQLW). The Cytoplasmic portion of the chain corresponds to 148–471 (ELRGCDYILI…MSELQVVRQS (324 aa)).

The protein belongs to the glycosyltransferase group 1 family.

It localises to the endoplasmic reticulum membrane. It catalyses the reaction an N,N'-diacetylchitobiosyl-diphospho-di-trans,poly-cis-dolichol + GDP-alpha-D-mannose = a beta-D-Man-(1-&gt;4)-beta-D-GlcNAc-(1-&gt;4)-alpha-D-GlcNAc-diphospho-di-trans,poly-cis-dolichol + GDP + H(+). It functions in the pathway protein modification; protein glycosylation. In terms of biological role, participates in the formation of the lipid-linked precursor oligosaccharide for N-glycosylation. Involved in assembling the dolichol-pyrophosphate-GlcNAc(2)-Man(5) intermediate on the cytoplasmic surface of the ER. In Eremothecium gossypii (strain ATCC 10895 / CBS 109.51 / FGSC 9923 / NRRL Y-1056) (Yeast), this protein is Chitobiosyldiphosphodolichol beta-mannosyltransferase (ALG1).